A 636-amino-acid polypeptide reads, in one-letter code: Threonine--tRNA ligase (636 aa).

The 63-residue stretch at 1 to 63 (MINITTSFPN…SKDGSVDPVT (63 aa)) folds into the TGS domain. A catalytic region spans residues 244-535 (DHRKIAKDLG…LIEHYAGNIP (292 aa)). 3 residues coordinate Zn(2+): cysteine 335, histidine 386, and histidine 512.

Belongs to the class-II aminoacyl-tRNA synthetase family. As to quaternary structure, homodimer. It depends on Zn(2+) as a cofactor.

The protein resides in the cytoplasm. It carries out the reaction tRNA(Thr) + L-threonine + ATP = L-threonyl-tRNA(Thr) + AMP + diphosphate + H(+). Its function is as follows. Catalyzes the attachment of threonine to tRNA(Thr) in a two-step reaction: L-threonine is first activated by ATP to form Thr-AMP and then transferred to the acceptor end of tRNA(Thr). Also edits incorrectly charged L-seryl-tRNA(Thr). The sequence is that of Threonine--tRNA ligase from Anaplasma marginale (strain Florida).